The chain runs to 694 residues: MAFDALFKPIEIGNLTIRNRVVSTAHAEVHATDGGMTTERYVKYYEEKAKGGCGLCICGGSSPVSIDSPQAWWSSVNISTDRIIPHFQNLADAVHKHGGKIMIQITHMGRRSRWDGFDWPTLLSPSGIREPVHRSTCKTIEEEEIWRVIDDFAQGARRVKEGGLDGIELSAVHQHLIDQFWSPRVNKREDQWGGSFENRMRFGLEVLKAVRAEVGDDFVVGLRICGDEFHPDGLTHDDMKRIAAYYDATGMVDFFGVVGSGCDTHNTLANVIPNMSYPPEPFLHLAAGVKDVVSVPVIHAQNIKDPNQASRILEGGYVDLVGMTRAHIADPHLIAKIQMDQTDRIRQCVGANYCIDRQYQGLDVLCIQNAATSREYLGLPHEIAPSDGPKRKVVVVGGGPGGMEAARVAAERGHEVTLFEAADQIGGQITLAAKAPQRDQIAGITRWYQLELARLKVDLRLGTRADEATIADLRPDIVVLATGGQPFLSQVPEWGYDEDRERSLVVSTWDILSGAVEPGKNVLIFDSICEFAGVSAADYLADKGATVEIVTDDIKPGAAVGGTTFPTYYRSLYEKEVIMTSDLALHRVYREGDALVAVLENEYTGAQEERVVDQVVVENGVRPDEALYYALKDQSRNKGQVDIEALYAIQPQPALATLDDDADAGFVLFRLGDCTAPRNTHAAIYDALRICKDF.

The protein in the N-terminal section; belongs to the NADH:flavin oxidoreductase/NADH oxidase family. As to quaternary structure, monomer. The purified enzyme exists in the form of a monomer, dimer or polymer under non-denaturing conditions, but only the monomeric protein exhibits enzyme activity. Requires FAD as cofactor. NAD(+) serves as cofactor. It depends on NADP(+) as a cofactor.

It localises to the cytoplasm. The enzyme catalyses oxidized 2[4Fe-4S]-[ferredoxin] + N,N-dimethylglycine + H2O = reduced 2[4Fe-4S]-[ferredoxin] + sarcosine + formaldehyde + 2 H(+). It carries out the reaction oxidized 2[4Fe-4S]-[ferredoxin] + sarcosine + H2O = reduced 2[4Fe-4S]-[ferredoxin] + formaldehyde + glycine + 2 H(+). Its activity is regulated as follows. Ca(2+) increases the activity by 12%, while the other metal ions tested have no or slightly inhibitory effects. The chelating agent EDTA inhibits the activity by 33%. In terms of biological role, involved in degradation of glycine betaine. Catalyzes the demethylation of both N,N-dimethylglycine (DMG) and sarcosine, releasing formaldehyde and forming glycine as the final product. Does not show activity toward trimethylamine (TMA), histamine, glycine betaine (GB) or choline. The C-N bond in DMG is probably oxidized by removal of a hydride equivalent to form a labile imine intermediate, which is then spontaneously hydrolyzed in the presence of water, producing sarcosine and formaldehyde. The two protons subtracted from DMG are transferred to the non-covalently bound FAD, resulting in the reduced form of FAD, which is subsequently reoxidized by coupling with reduction of the enzyme-bound NAD(P)(+). Regeneration of NAD(P)(+) is achieved by electron transfer to the [4Fe-4S] cluster in the probable membrane-anchored ferredoxin csal_0991. The sequence is that of N,N-dimethylglycine/sarcosine dehydrogenase from Chromohalobacter salexigens (strain ATCC BAA-138 / DSM 3043 / CIP 106854 / NCIMB 13768 / 1H11).